The sequence spans 2530 residues: Cullin-9 (2530 aa).

Lys87 is covalently cross-linked (Glycyl lysine isopeptide (Lys-Gly) (interchain with G-Cter in ubiquitin)). A CPH domain is found at 367–440 (RSEFSSRSGY…HWHMLEILGP (74 aa)). 2 disordered regions span residues 585–639 (LPSS…KAQS) and 930–951 (RGSP…GSPE). Residues 940–949 (TPSTQGQDGS) are compositionally biased toward polar residues. Ser978 carries the post-translational modification Phosphoserine. One can recognise a DOC domain in the interval 1145–1324 (PITIPFFDVF…RTCLFYTIRA (180 aa)). An ATP-binding site is contributed by 1365–1372 (AAQALGKT). Disordered regions lie at residues 1435 to 1468 (EAPP…TPVC) and 1667 to 1690 (GDQE…GREL). Ser1459 carries the phosphoserine modification. Residue Lys1884 forms a Glycyl lysine isopeptide (Lys-Gly) (interchain with G-Cter in NEDD8) linkage. The TRIAD supradomain stretch occupies residues 2070–2287 (RPDQCPVCVT…KDYYNCSAMV (218 aa)). Positions 2074, 2077, 2092, 2094, 2097, 2100, 2119, 2124, 2164, 2170, 2185, 2188, 2193, 2196, 2202, 2207, 2240, and 2243 each coordinate Zn(2+). The RING-type 1 zinc finger occupies 2074–2124 (CPVCVTPLGPHDDSPSLCCLHCCCKSCWNEYLTTRIEQNFVLNCTCPIADC). An IBR-type zinc finger spans residues 2144–2207 (SKYEKALLRG…FPEAHYPASC (64 aa)). An RING-type 2; atypical zinc finger spans residues 2240–2269 (CPSCQAPIEKNEGCLHMTCARCNHGFCWRC). The active site involves Cys2253. The Zn(2+) site is built by Cys2258, Cys2261, Cys2266, Cys2269, His2277, and Cys2283. Position 2440 is a phosphoserine (Ser2440). The interval 2443-2530 (VETREVKGSN…DEDEDDESYD (88 aa)) is disordered. Residues 2452 to 2462 (NVPSDQPQGSS) show a composition bias toward polar residues. Residues 2459-2500 (QGSSGLEVEDEEEEEEEEEEEEEEEEEDVPEWQHEFDEELDN) are a coiled coil. 2 stretches are compositionally biased toward acidic residues: residues 2465–2510 (EVED…EESE) and 2520–2530 (GDEDEDDESYD).

Belongs to the cullin family. In terms of assembly, component of a Cul9-RING complex consisting of CUL9 and RBX1; the CUL9-RBX1 complex is a heterododecamer composed of six CUL9 and six RBX1 protomers. Interacts (via C-terminal TRIAD/RBR supradomain) with E2 ubiquitin-conjugating enzyme UBE2L3. Interacts with CUL7; the interaction with the CUL7 component of the 3M complex leads to inhibition of CUL9 activity. The CUL7-CUL9 heterodimer seems to interact specifically with TP53, likely via the CPH domain. Forms a complex with p53/TP53 in the cytoplasm of unstressed cells. Interacts with UBCH7 and UBCH8. Autoubiquitinated by the CUL9-RBX1 complex at Lys-87. Post-translationally, neddylated. Neddylation is mediated by E1 enzyme UBA3-NAE1 complex and E2 enzyme UBE2F. Structural rearrangment of the C-terminal TRIAD/RBR supradomain may play a role in neddylation and deneddylation.

The protein resides in the cytoplasm. Functionally, core component of the Cul9-RING ubiquitin-protein ligase complex composed of CUL9 and RBX1. The CUL9-RBX1 complex mediates ubiquitination and subsequent degradation of BIRC5 and is required to maintain microtubule dynamics and genome integrity. Acts downstream of the 3M complex, which inhibits CUL9 activity and the ubiquitination of BIRC5. The CUL9-RBX1 complex also mediates mono-ubiquitination of p53/TP53. Acts as a cytoplasmic anchor protein in p53/TP53-associated protein complex. Regulates the subcellular localization of p53/TP53 and its subsequent function. Ubiquitinates apurinic/apyrimidinic endodeoxyribonuclease APEX2. Ubiquitination by the CUL9-RBX1 complex is predominantly mediated by E2 ubiquitin-conjugating enzymes UBE2L3 and UBE2D2. The sequence is that of Cullin-9 (Cul9) from Mus musculus (Mouse).